A 1520-amino-acid chain; its full sequence is Putative lipoprotein AcfD homolog (1520 aa).

Positions 1 to 23 (MNKKFKYKKSLLAAILSATLLAG) are cleaved as a signal peptide. 2 disordered regions span residues 22-107 (AGCD…GATC) and 226-247 (NAATDKAPSTHTSPVVPVTTPG). The N-palmitoyl cysteine moiety is linked to residue cysteine 24. A lipid anchor (S-diacylglycerol cysteine) is attached at cysteine 24. The segment covering 31 to 42 (SSSDTPPVDSGT) has biased composition (low complexity). Residues 51 to 77 (DPTPNPEPTPEPTPDPEPTPEPIPDPE) are compositionally biased toward pro residues. Residues 97–107 (GGSQRVTGATC) show a composition bias toward polar residues. Low complexity predominate over residues 234–247 (STHTSPVVPVTTPG). A Peptidase M60 domain is found at 1081–1381 (GNMQSTGLWA…MYAQLKEWAE (301 aa)). Residues 1498 to 1520 (DLPKPEQGPETINQVTEHKMSAE) are disordered.

The protein to V.cholerae AcfD (VC_0845).

The protein resides in the cell inner membrane. In terms of biological role, involved in a type II secretion system (T2SS, formerly general secretion pathway, GSP) for the export of folded proteins across the outer membrane. The chain is Putative lipoprotein AcfD homolog (yghJ) from Escherichia coli (strain K12).